The sequence spans 158 residues: NAD(P)H-quinone oxidoreductase subunit O, chloroplastic (158 aa).

Residues 1-38 (MAFSATVSQLSSLSTISSSLPISSRRLPHRSLPQFTVK) constitute a chloroplast transit peptide. The interval 33–70 (PQFTVKAEAEKEKQSTQGKSDGEASPAATKTPKTLPKK) is disordered. Low complexity predominate over residues 56–70 (ASPAATKTPKTLPKK).

The protein belongs to the NDH complex subunit O family. As to quaternary structure, part of the chloroplast NDH complex, composed of a mixture of chloroplast and nucleus encoded subunits. Component of the NDH subcomplex A, at least composed of ndhH, ndhI, ndhJ, ndhK, ndhL, ndhM, ndhN and ndhO.

It is found in the plastid. Its subcellular location is the chloroplast thylakoid membrane. The enzyme catalyses a plastoquinone + NADH + (n+1) H(+)(in) = a plastoquinol + NAD(+) + n H(+)(out). The catalysed reaction is a plastoquinone + NADPH + (n+1) H(+)(in) = a plastoquinol + NADP(+) + n H(+)(out). Functionally, NDH shuttles electrons from NAD(P)H:plastoquinone, via FMN and iron-sulfur (Fe-S) centers, to quinones in the photosynthetic chain and possibly in a chloroplast respiratory chain. The immediate electron acceptor for the enzyme in this species is believed to be plastoquinone. Couples the redox reaction to proton translocation, and thus conserves the redox energy in a proton gradient. This is NAD(P)H-quinone oxidoreductase subunit O, chloroplastic from Arabidopsis thaliana (Mouse-ear cress).